The sequence spans 250 residues: Probable 2' cyclic ADP-D-ribose synthase TcpB (250 aa).

Residues 1–46 are disordered; sequence MSKEKQAQSKAHKAQQAISSAKSLSTQKSKMSELERATRDGAAIGK. Low complexity predominate over residues 14–23; the sequence is AQQAISSAKS. Over residues 30 to 39 the composition is skewed to basic and acidic residues; that stretch reads KMSELERATR. The region spanning 117 to 250 is the TIR domain; the sequence is EEYDFFISHA…EIAKELHSLI (134 aa). Glu192 is a catalytic residue.

In terms of assembly, homodimer. Interacts with host TIRAP. Interacts with host TLR4, abolishes the interaction of host TIRAP with TLR4.

The protein localises to the secreted. It is found in the host cell membrane. The enzyme catalyses NAD(+) + H2O = ADP-D-ribose + nicotinamide + H(+). It carries out the reaction NAD(+) = 2'cADPR + nicotinamide + H(+). In terms of biological role, virulence factor that interferes with host Toll-like receptor 2 (TLR2) signaling, resulting in the reduction of dendritic cell maturation, inhibition of pro-inflammatory cytokine secretion and impaired NF-kappa-B activation in macrophages. Also acts on host TLR4. Binds host lipids. Has NAD(+) hydrolase (NADase) activity, catalyzes cleavage of NAD(+) into ADP-D-ribose (ADPR) and nicotinamide, also generates a cyclization variant of cyclic ADPR (cADPR), termed v-cADPR (probably 2'cADPR). This chain is Probable 2' cyclic ADP-D-ribose synthase TcpB, found in Brucella abortus (strain 2308).